The chain runs to 207 residues: Interleukin-6 (207 aa).

The signal sequence occupies residues 1-18; that stretch reads MKFFSIASLGLLLVVATA. Positions 26–47 are disordered; sequence REDGENSVTRNKPTRASSGKTR. Polar residues predominate over residues 31–44; sequence NSVTRNKPTRASSG. Residues Cys-65 and Cys-71 are joined by a disulfide bond. At Ser-74 the chain carries Phosphoserine. Cys-94 and Cys-104 are oxidised to a cystine.

The protein belongs to the IL-6 superfamily. In terms of assembly, component of a hexamer of two molecules each of IL6, IL6R and IL6ST; first binds to IL6R to associate with the signaling subunit IL6ST. Interacts with IL6R (via the N-terminal ectodomain); this interaction may be affected by IL6R-binding with SORL1, hence decreasing IL6 cis signaling. Interacts with SORL1 (via the N-terminal ectodomain); this interaction leads to IL6 internalization and lysosomal degradation. May form a trimeric complex with the soluble SORL1 ectodomain and soluble IL6R receptor; this interaction might stabilize circulating IL6, hence promoting IL6 trans signaling.

The protein resides in the secreted. Functionally, cytokine with a wide variety of biological functions in immunity, tissue regeneration, and metabolism. Binds to IL6R, then the complex associates to the signaling subunit IL6ST/gp130 to trigger the intracellular IL6-signaling pathway. The interaction with the membrane-bound IL6R and IL6ST stimulates 'classic signaling', whereas the binding of IL6 and soluble IL6R to IL6ST stimulates 'trans-signaling'. Alternatively, 'cluster signaling' occurs when membrane-bound IL6:IL6R complexes on transmitter cells activate IL6ST receptors on neighboring receiver cells. IL6 is a potent inducer of the acute phase response. Rapid production of IL6 contributes to host defense during infection and tissue injury, but excessive IL6 synthesis is involved in disease pathology. In the innate immune response, is synthesized by myeloid cells, such as macrophages and dendritic cells, upon recognition of pathogens through toll-like receptors (TLRs) at the site of infection or tissue injury. In the adaptive immune response, is required for the differentiation of B cells into immunoglobulin-secreting cells. Plays a major role in the differentiation of CD4(+) T cell subsets. Essential factor for the development of T follicular helper (Tfh) cells that are required for the induction of germinal-center formation. Required to drive naive CD4(+) T cells to the Th17 lineage. Also required for proliferation of myeloma cells and the survival of plasmablast cells. In terms of biological role, acts as an essential factor in bone homeostasis and on vessels directly or indirectly by induction of VEGF, resulting in increased angiogenesis activity and vascular permeability. Induces, through 'trans-signaling' and synergistically with IL1B and TNF, the production of VEGF. Involved in metabolic controls, is discharged into the bloodstream after muscle contraction increasing lipolysis and improving insulin resistance. 'Trans-signaling' in central nervous system also regulates energy and glucose homeostasis. Mediates, through GLP-1, crosstalk between insulin-sensitive tissues, intestinal L cells and pancreatic islets to adapt to changes in insulin demand. Also acts as a myokine. Plays a protective role during liver injury, being required for maintenance of tissue regeneration. Also has a pivotal role in iron metabolism by regulating HAMP/hepcidin expression upon inflammation or bacterial infection. Through activation of IL6ST-YAP-NOTCH pathway, induces inflammation-induced epithelial regeneration. In Marmota monax (Woodchuck), this protein is Interleukin-6 (IL6).